The chain runs to 159 residues: Protein-export protein SecB (159 aa).

Belongs to the SecB family. In terms of assembly, homotetramer, a dimer of dimers. One homotetramer interacts with 1 SecA dimer.

Its subcellular location is the cytoplasm. In terms of biological role, one of the proteins required for the normal export of preproteins out of the cell cytoplasm. It is a molecular chaperone that binds to a subset of precursor proteins, maintaining them in a translocation-competent state. It also specifically binds to its receptor SecA. The chain is Protein-export protein SecB from Burkholderia mallei (strain NCTC 10229).